A 134-amino-acid polypeptide reads, in one-letter code: Profilin-3 (134 aa).

Cysteines 13 and 118 form a disulfide. Positions 84 to 100 (AVIRGKKGSGGITIKKT) match the Involved in PIP2 interaction motif. Residue T114 is modified to Phosphothreonine.

The protein belongs to the profilin family. As to quaternary structure, occurs in many kinds of cells as a complex with monomeric actin in a 1:1 ratio. Post-translationally, phosphorylated by MAP kinases.

It is found in the cytoplasm. The protein resides in the cytoskeleton. Its function is as follows. Binds to actin and affects the structure of the cytoskeleton. At high concentrations, profilin prevents the polymerization of actin, whereas it enhances it at low concentrations. By binding to PIP2, it inhibits the formation of IP3 and DG. This Olea europaea (Common olive) protein is Profilin-3 (PRO3).